We begin with the raw amino-acid sequence, 368 residues long: Phosphate acyltransferase (368 aa).

This sequence belongs to the PlsX family. In terms of assembly, homodimer. Probably interacts with PlsY.

Its subcellular location is the cytoplasm. The enzyme catalyses a fatty acyl-[ACP] + phosphate = an acyl phosphate + holo-[ACP]. It participates in lipid metabolism; phospholipid metabolism. Functionally, catalyzes the reversible formation of acyl-phosphate (acyl-PO(4)) from acyl-[acyl-carrier-protein] (acyl-ACP). This enzyme utilizes acyl-ACP as fatty acyl donor, but not acyl-CoA. The polypeptide is Phosphate acyltransferase (Cereibacter sphaeroides (strain ATCC 17025 / ATH 2.4.3) (Rhodobacter sphaeroides)).